We begin with the raw amino-acid sequence, 477 residues long: MSESRQKLHPLLVHVARSFGHFLVPRKPSCLLVAVSGGADSLALLYAAHELAPDFGVCACAVTVDHSLRAQEGALDARFVRALCARFSPPLPCFVQQISAGAVHACAKIRGRGVQDAARALRYKVFDHVAARCGAQVVLTAHTRDDQYETLLMRLFQGAAASALQGIRAARGRYVRPLLKVSRTCVEDFLQTRGVRWREDASNTCRKYVRNRIRHELIPALDAVLAGWRSGLDKTFAGISAEHSFCVAALTRWREGCSHAWEPVPRALGTRLRMPRSDFLAAEFILRFFLLQEACVRLGVSHRVPRGALERCARFDGVRRIHVSGLQLERAGAYVLFSCIHASDTARETKKQDAGSPPSSEKQGVSAIYVARPGAYPCACGTLLVEVRPAGVFVCCAQDHVGVGPFSFPFYIRTHRTGDTISIRGGHKGIRKMFSEWHVPLSDRTVLPMIEQDGVLRALYGAALGYQNRYAERTPHE.

36–41 (SGGADS) is a binding site for ATP.

The protein belongs to the tRNA(Ile)-lysidine synthase family.

It is found in the cytoplasm. It catalyses the reaction cytidine(34) in tRNA(Ile2) + L-lysine + ATP = lysidine(34) in tRNA(Ile2) + AMP + diphosphate + H(+). Ligates lysine onto the cytidine present at position 34 of the AUA codon-specific tRNA(Ile) that contains the anticodon CAU, in an ATP-dependent manner. Cytidine is converted to lysidine, thus changing the amino acid specificity of the tRNA from methionine to isoleucine. The protein is tRNA(Ile)-lysidine synthase of Treponema pallidum (strain Nichols).